The following is a 342-amino-acid chain: Cytochrome f (342 aa).

The first 28 residues, 1-28 (MKKQWIAGAFGLTAALAGLVSVPQSALA), serve as a signal peptide directing secretion. Heme-binding residues include C48, C51, and H52. The chain crosses the membrane as a helical span at residues 305 to 325 (VTWLVAFLAAAFICQLLLVLK).

The protein belongs to the cytochrome f family. As to quaternary structure, the 4 large subunits of the cytochrome b6-f complex are cytochrome b6, subunit IV (17 kDa polypeptide, PetD), cytochrome f and the Rieske protein, while the 4 small subunits are PetG, PetL, PetM and PetN. The complex functions as a dimer. The cofactor is heme.

It localises to the cell inner membrane. Component of the cytochrome b6-f complex, which mediates electron transfer between photosystem II (PSII) and photosystem I (PSI), cyclic electron flow around PSI, and state transitions. The chain is Cytochrome f (petA) from Gloeobacter violaceus (strain ATCC 29082 / PCC 7421).